The primary structure comprises 228 residues: Protein GrpE (228 aa).

A compositionally biased stretch (basic and acidic residues) spans 1–22; it reads MDDKQKTNEEVKASSFDSEKSS. Residues 1-71 form a disordered region; the sequence is MDDKQKTNEE…DQTNTNNNEL (71 aa). Polar residues predominate over residues 38 to 53; the sequence is QNVQHDNGSNPAQKQN.

This sequence belongs to the GrpE family. Homodimer.

The protein resides in the cytoplasm. Functionally, participates actively in the response to hyperosmotic and heat shock by preventing the aggregation of stress-denatured proteins, in association with DnaK and GrpE. It is the nucleotide exchange factor for DnaK and may function as a thermosensor. Unfolded proteins bind initially to DnaJ; upon interaction with the DnaJ-bound protein, DnaK hydrolyzes its bound ATP, resulting in the formation of a stable complex. GrpE releases ADP from DnaK; ATP binding to DnaK triggers the release of the substrate protein, thus completing the reaction cycle. Several rounds of ATP-dependent interactions between DnaJ, DnaK and GrpE are required for fully efficient folding. The sequence is that of Protein GrpE from Coprothermobacter proteolyticus (strain ATCC 35245 / DSM 5265 / OCM 4 / BT).